The chain runs to 255 residues: Homeobox protein Hox-D4 (255 aa).

Residues 31–127 (EQGADYYGGG…PKQPPSGTAL (97 aa)) are disordered. A compositionally biased stretch (pro residues) spans 94–107 (EPCPAPPAPPPAPL). The Antp-type hexapeptide motif lies at 133 to 138 (VYPWMK). A DNA-binding region (homeobox) is located at residues 154–213 (PKRSRTAYTRQQVLELEKEFHFNRYLTRRRRIEIAHTLCLSERQIKIWFQNRRMKWKKDH). Residues 212-255 (DHKLPNTKGRSSSSSSSSSCSSSVAPSQHLQPMAKDHHTDLTTL) are disordered. Low complexity predominate over residues 222-234 (SSSSSSSSSCSSS). Residues 245–255 (AKDHHTDLTTL) are compositionally biased toward basic and acidic residues.

This sequence belongs to the Antp homeobox family. Deformed subfamily. Forms a DNA-binding heterodimer with transcription factor PBX1.

It localises to the nucleus. Its function is as follows. Sequence-specific transcription factor which is part of a developmental regulatory system that provides cells with specific positional identities on the anterior-posterior axis. The polypeptide is Homeobox protein Hox-D4 (HOXD4) (Homo sapiens (Human)).